The following is a 301-amino-acid chain: Glycine--tRNA ligase alpha subunit (301 aa).

This sequence belongs to the class-II aminoacyl-tRNA synthetase family. In terms of assembly, tetramer of two alpha and two beta subunits.

It localises to the cytoplasm. It carries out the reaction tRNA(Gly) + glycine + ATP = glycyl-tRNA(Gly) + AMP + diphosphate. This chain is Glycine--tRNA ligase alpha subunit, found in Shewanella piezotolerans (strain WP3 / JCM 13877).